Consider the following 111-residue polypeptide: Large ribosomal subunit protein eL31 (111 aa).

It belongs to the eukaryotic ribosomal protein eL31 family.

The polypeptide is Large ribosomal subunit protein eL31 (RPL31) (Tetrahymena thermophila (strain SB210)).